The following is a 600-amino-acid chain: Adenine deaminase 2 (600 aa).

This sequence belongs to the metallo-dependent hydrolases superfamily. Adenine deaminase family. Mn(2+) is required as a cofactor.

The enzyme catalyses adenine + H2O + H(+) = hypoxanthine + NH4(+). The sequence is that of Adenine deaminase 2 from Bradyrhizobium sp. (strain ORS 278).